A 725-amino-acid polypeptide reads, in one-letter code: Catalase-peroxidase (725 aa).

The segment at residues 98–226 (WHMAGSYRTS…LAAVQMGLIY (129 aa)) is a cross-link (tryptophyl-tyrosyl-methioninium (Trp-Tyr) (with M-252)). The active-site Proton acceptor is the histidine 99. Residues 226-252 (YVNPEGVNGKSDPQATAYQMRETFARM) constitute a cross-link (tryptophyl-tyrosyl-methioninium (Tyr-Met) (with W-98)). Histidine 267 lines the heme b pocket.

This sequence belongs to the peroxidase family. Peroxidase/catalase subfamily. In terms of assembly, homodimer or homotetramer. The cofactor is heme b. In terms of processing, formation of the three residue Trp-Tyr-Met cross-link is important for the catalase, but not the peroxidase activity of the enzyme.

The enzyme catalyses H2O2 + AH2 = A + 2 H2O. It catalyses the reaction 2 H2O2 = O2 + 2 H2O. Bifunctional enzyme with both catalase and broad-spectrum peroxidase activity. This chain is Catalase-peroxidase, found in Paracoccus denitrificans (strain Pd 1222).